The following is a 669-amino-acid chain: DNA ligase (669 aa).

Residues 34 to 38 (DAEYD), 83 to 84 (SL), and Glu-114 contribute to the NAD(+) site. The active-site N6-AMP-lysine intermediate is Lys-116. 4 residues coordinate NAD(+): Arg-137, Glu-171, Lys-287, and Lys-311. Residues Cys-405, Cys-408, Cys-423, and Cys-428 each contribute to the Zn(2+) site. The BRCT domain maps to 591-669 (NVESYFAGKT…EERFLQELNK (79 aa)).

This sequence belongs to the NAD-dependent DNA ligase family. LigA subfamily. Mg(2+) serves as cofactor. The cofactor is Mn(2+).

It catalyses the reaction NAD(+) + (deoxyribonucleotide)n-3'-hydroxyl + 5'-phospho-(deoxyribonucleotide)m = (deoxyribonucleotide)n+m + AMP + beta-nicotinamide D-nucleotide.. Its function is as follows. DNA ligase that catalyzes the formation of phosphodiester linkages between 5'-phosphoryl and 3'-hydroxyl groups in double-stranded DNA using NAD as a coenzyme and as the energy source for the reaction. It is essential for DNA replication and repair of damaged DNA. This is DNA ligase from Bacillus cereus (strain ATCC 10987 / NRS 248).